A 215-amino-acid chain; its full sequence is Large ribosomal subunit protein bL25 (215 aa).

Acidic residues predominate over residues 192 to 203; that stretch reads EEATEEEEEAAE. The tract at residues 192–215 is disordered; it reads EEATEEEEEAAEPEVIKRKEEEEE. The segment covering 205–215 has biased composition (basic and acidic residues); sequence EVIKRKEEEEE.

It belongs to the bacterial ribosomal protein bL25 family. CTC subfamily. Part of the 50S ribosomal subunit; part of the 5S rRNA/L5/L18/L25 subcomplex. Contacts the 5S rRNA. Binds to the 5S rRNA independently of L5 and L18.

Functionally, this is one of the proteins that binds to the 5S RNA in the ribosome where it forms part of the central protuberance. This is Large ribosomal subunit protein bL25 from Thermotoga maritima (strain ATCC 43589 / DSM 3109 / JCM 10099 / NBRC 100826 / MSB8).